The primary structure comprises 887 residues: Beta-galactosidase 9 (887 aa).

A signal peptide spans 1–30 (MAESIRTFSLQWRILSLIIALLVYFPILSG). N37 is a glycosylation site (N-linked (GlcNAc...) asparagine). The active-site Proton donor is E194. E263 functions as the Nucleophile in the catalytic mechanism. N-linked (GlcNAc...) asparagine glycans are attached at residues N463, N485, N496, N527, and N785. The SUEL-type lectin domain maps to 791 to 877 (NSVAPEVHLH…KTLAVMSRCS (87 aa)). Residue N881 is glycosylated (N-linked (GlcNAc...) asparagine).

Belongs to the glycosyl hydrolase 35 family. Ubiquitous, with higher expression levels in siliques.

The protein resides in the secreted. The protein localises to the extracellular space. It is found in the apoplast. It carries out the reaction Hydrolysis of terminal non-reducing beta-D-galactose residues in beta-D-galactosides.. This Arabidopsis thaliana (Mouse-ear cress) protein is Beta-galactosidase 9 (BGAL9).